The sequence spans 368 residues: Cobalt-precorrin-5B C(1)-methyltransferase (368 aa).

This sequence belongs to the CbiD family.

It catalyses the reaction Co-precorrin-5B + S-adenosyl-L-methionine = Co-precorrin-6A + S-adenosyl-L-homocysteine. It functions in the pathway cofactor biosynthesis; adenosylcobalamin biosynthesis; cob(II)yrinate a,c-diamide from sirohydrochlorin (anaerobic route): step 6/10. In terms of biological role, catalyzes the methylation of C-1 in cobalt-precorrin-5B to form cobalt-precorrin-6A. In Brucella anthropi (strain ATCC 49188 / DSM 6882 / CCUG 24695 / JCM 21032 / LMG 3331 / NBRC 15819 / NCTC 12168 / Alc 37) (Ochrobactrum anthropi), this protein is Cobalt-precorrin-5B C(1)-methyltransferase.